Consider the following 1848-residue polypeptide: MATPQVKDLVLRSPAGSSDVISFAWPLQIGHGQDKHDNGIDIIDTIKFVCDELPSMSSAFEETNLHQIDTACYKTMTGLVDRFNKAVDSIVALEKGTSLPAERLNKFAHPSLLRHILQLVYNAAVLDPDKLNQYEPFSPEVYGETSYELVQQMLKHVTVSKEDTFIDLGSGVGQVVLQMAGSFPLKTCIGIEKADTPARYAERMDVIFRQYMGWFGKRFCEYKLIKGDFLVDEHRENITSSTLVFVNNFAFGPTVDHQLKERFADLRDGARVVSSKSFCPLNFRITDRNLSDIGTIMHVSEIPPLKGSVSWTCKPVSYYLHVIDRTILERYFQRLKTKGGNDHESVGTVRTTRDRAKREANVGQHHHNNHHSNNHANSNNHQRDREQSNGATATAAHQQRHQSQSPANVSGAGIVLAASGQQAASKTRQQLQHQHNQQQRSLDMESSTESDGDATNGNGGNTTTATNTTSASNGPMTRKVWSDWCSSKGKSSQSDDEENNNSNSNGGSNGGSIGGGSVGRQARATTQKKRKKLTRKAAIASKSAAAAQREAEAAAAAAVSVPSKESSSKEDPPRAASAGPGRKGRMKKGARGRKSLKIVGLEALHKQTVLSTSLDTMTKKLPAAPGTVDQQLTALLTENMSHAELDIPTAPQDTPYALQILLDVFRSQYTSMIEHMKSSAYVPQVQKQIAQEQERMARLKNRASQLDKQIKVLIDDSVALLKVRMNELGIHVNSPNDLIAQAKEIVGRHKDLQHTASRMRNEVTFYEGEQKLLLNKQLKNLPEYQKLCGTVNGKVKLEVPPELSETTAQELVLKEIANTLSQRKKLYAQVSTIEQETSVLQKTAEERSTAATLLAQGTNMIVSTGSSSSSSTTVCASAVTAQSNKLNSVKNSRRNREHRARSQEWPEVPEVGKIQESNPEVLAQKIVETCRQIEAGKFQGAGAPSSQVNGKNKAIIEVPPPPATAPVSIKSSPGHHYKDTTLMPAPKQQQQQQMTLSQLPKCELPGLSTSRKQESPKVANFEDRLKSIITTALNEDQEQRSKAVESSPSPSPLHSPAPKRSKQHPAGAINPAQSLPNNLHNIITVSTQGLMHLNANTTISPITPPLPGPGAGATASTAPPPPANLPYGAYGGAVAKTTISGKYQAAKEPKYSPVRQAPLPPPPSHMASLYPAGQQTTPADLGYQRRRSSVSATSYEHYMVQQQQQLQQQQLMLAAAAHAAQRQQMRVEEQQQQQQHQHHHHHHHHHPQHRLPQHVQHQHPHQHHPNEFKAPPADSHLQRSSSREQLIVEPPQTQPLELLPRASSANSDYSGYRIRPPSRPSSNSSQPDYTQVSPAKMALRRHLSQEKLSQHVTPQATPPLPGHGGAPTSGKTIGDLVNGEIERTLEISHQSIINAAVNMSTSGASFMERAFLNERSNDRLLINLNAQRPERVHVRPLSEESQDPQPTSYAQERGPGLGAGGAAAGGNSNLATLAHVAYAQKAQGGARANAGTAPPATHSSSARSGRDYQPVALPRAELKGSIEAYFHEEQQQKQSKGAGSAGSSSLRGPRLNGANPPLEGLAASLQDHVRARKYKEETEERQRRAAAAASSSAGPPAGMELPTHYAHQAPPAHSYHHHGASINGTPHKVELGIKRSSPLAPHQQPPRPSKLAHYEPPTTQQQHAHAHLYANGQVLPPPPAHDATTPSPTPSSSSSSCGRRSNSNNGKLLVDPPLLMSPEINSLLGDERPLQLSHHQQQQQQMLHHHQSQQQQHLQLTQQQLRVAHLGHGLSHGHSTMPTLGGQRNGNGNAADDVNDLATQRTITNYDPRRRLRTTLSGPTKLSAAHSNQNLNGYVMADSSSSCPTIPQ.

Positions Asp19 to Lys336 constitute a DOT1 domain. Residues Tyr142–Thr145, Phe165–Gln174, Glu192, and Asp228–Phe229 contribute to the S-adenosyl-L-methionine site. Disordered regions lie at residues Lys338 to Ala537, Ala558 to Arg593, Leu886 to Val908, Pro960 to Leu996, Leu1033 to Leu1075, His1165 to Val1190, Gln1221 to Ser1333, Gln1345 to Gly1374, Val1432 to Ala1463, Ala1486 to Tyr1508, Glu1529 to Glu1559, Lys1573 to His1604, Ser1637 to Pro1713, and Gln1731 to Thr1757. Over residues Gly339 to Ala360 the composition is skewed to basic and acidic residues. Residues Gln364–Asn373 are compositionally biased toward basic residues. A compositionally biased stretch (low complexity) spans Ala391–Ser405. Residues Ser419–Arg428 are compositionally biased toward polar residues. Composition is skewed to low complexity over residues Gln429–Gln439 and Asp453–Gly474. Phosphoserine occurs at positions 491, 492, and 494. A compositionally biased stretch (gly residues) spans Gly507–Val518. Composition is skewed to basic residues over residues Thr526–Arg535 and Arg582–Arg593. Residues Gln1221–Gln1235 show a composition bias toward low complexity. The segment covering His1236–His1263 has biased composition (basic residues). The segment covering Glu1289–Pro1300 has biased composition (low complexity). Residues Ser1318, Ser1324, and Ser1325 each carry the phosphoserine modification. Low complexity predominate over residues Gln1532–Ser1545. A compositionally biased stretch (basic and acidic residues) spans Tyr1574–Arg1583. Composition is skewed to low complexity over residues Ala1585–Gly1598 and His1681–Ser1696. Residues Cys1697–Gly1706 are compositionally biased toward polar residues.

This sequence belongs to the class I-like SAM-binding methyltransferase superfamily. DOT1 family. As to expression, broadly expressed in most tissues. Expressed in a large subset of neurons and in a small subset of glial cells.

The protein localises to the nucleus. The enzyme catalyses L-lysyl(79)-[histone H3] + 3 S-adenosyl-L-methionine = N(6),N(6),N(6)-trimethyl-L-lysyl(79)-[histone H3] + 3 S-adenosyl-L-homocysteine + 3 H(+). Functionally, histone methyltransferase. Methylates 'Lys-79' of histone H3. Required for Polycomb Group (PcG) and trithorax Group (trxG) maintenance of expression. Also involved in telomeric silencing but do not in centric heterochromatin. Probably participates in pairing sensitivity. This chain is Histone-lysine N-methyltransferase, H3 lysine-79 specific (gpp), found in Drosophila melanogaster (Fruit fly).